A 794-amino-acid chain; its full sequence is ALG-2 interacting protein X (794 aa).

The BRO1 domain maps to 1-385 (MLSIERKRTE…DNIEFHNQSA (385 aa)). Coiled coils occupy residues 499–568 (SFIR…LCKK) and 600–655 (LNES…NLDE). The segment at 695-794 (GVNPHSPLTS…PPYNSNNKHY (100 aa)) is disordered. The segment covering 698 to 712 (PHSPLTSPSPSLQSP) has biased composition (low complexity). Polar residues predominate over residues 713–722 (VNNYPNQFSS). 2 stretches are compositionally biased toward low complexity: residues 723–742 (PQYH…YVPS) and 749–764 (YSYN…QFGG). Over residues 765–787 (PLPPPQSFSAPPPPQSFTAPPPY) the composition is skewed to pro residues.

As to quaternary structure, self-associates; the interaction is calcium-independent Interacts with pefa; the interaction is calcium-dependent. Interacts with pefb; the interaction is calcium-dependent.

The protein resides in the cytoplasm. It is found in the cytoplasmic vesicle membrane. It localises to the endosome. Unknown. Required for development but not for cell death. This is ALG-2 interacting protein X (alxA) from Dictyostelium discoideum (Social amoeba).